Consider the following 508-residue polypeptide: Light-independent protochlorophyllide reductase subunit B (508 aa).

Aspartate 36 contributes to the [4Fe-4S] cluster binding site. Residue aspartate 294 is the Proton donor of the active site. Substrate is bound at residue 429-430 (GM).

Belongs to the ChlB/BchB/BchZ family. In terms of assembly, protochlorophyllide reductase is composed of three subunits; ChlL, ChlN and ChlB. Forms a heterotetramer of two ChlB and two ChlN subunits. [4Fe-4S] cluster serves as cofactor.

It catalyses the reaction chlorophyllide a + oxidized 2[4Fe-4S]-[ferredoxin] + 2 ADP + 2 phosphate = protochlorophyllide a + reduced 2[4Fe-4S]-[ferredoxin] + 2 ATP + 2 H2O. The protein operates within porphyrin-containing compound metabolism; chlorophyll biosynthesis (light-independent). Functionally, component of the dark-operative protochlorophyllide reductase (DPOR) that uses Mg-ATP and reduced ferredoxin to reduce ring D of protochlorophyllide (Pchlide) to form chlorophyllide a (Chlide). This reaction is light-independent. The NB-protein (ChlN-ChlB) is the catalytic component of the complex. The protein is Light-independent protochlorophyllide reductase subunit B of Trichormus variabilis (strain ATCC 29413 / PCC 7937) (Anabaena variabilis).